Consider the following 185-residue polypeptide: Protein GrpE (185 aa).

A disordered region spans residues 1–37 (MEEQEEKQYNQNIQDNEEGTQMREELQESTSAQQTLQ). Residues 28–37 (ESTSAQQTLQ) show a composition bias toward polar residues.

It belongs to the GrpE family. In terms of assembly, homodimer.

It localises to the cytoplasm. Functionally, participates actively in the response to hyperosmotic and heat shock by preventing the aggregation of stress-denatured proteins, in association with DnaK and GrpE. It is the nucleotide exchange factor for DnaK and may function as a thermosensor. Unfolded proteins bind initially to DnaJ; upon interaction with the DnaJ-bound protein, DnaK hydrolyzes its bound ATP, resulting in the formation of a stable complex. GrpE releases ADP from DnaK; ATP binding to DnaK triggers the release of the substrate protein, thus completing the reaction cycle. Several rounds of ATP-dependent interactions between DnaJ, DnaK and GrpE are required for fully efficient folding. The sequence is that of Protein GrpE from Helicobacter hepaticus (strain ATCC 51449 / 3B1).